Reading from the N-terminus, the 766-residue chain is Alpha-onocerin synthase LCD (766 aa).

PFTB repeat units lie at residues 101-143 (LCRA…GALD), 151-192 (QREI…RLMG), 456-507 (QESY…STTD), 517-558 (IHEC…PGYK), 594-634 (IQEG…LASG), 643-684 (IQRA…HVVH), and 705-752 (LHRA…WALG). Residue Asp488 is the Proton donor of the active site.

This sequence belongs to the terpene cyclase/mutase family.

It carries out the reaction pre-alpha-onocerin = alpha-onocerin. It participates in secondary metabolite biosynthesis; terpenoid biosynthesis. Its function is as follows. Oxidosqualene cyclase involved in the biosynthesis of alpha-onocerin, a triterpenoid characterized by a symmetrical structure due to cyclizations at both termini of dioxidosqualene that inhibits acetylcholinesterase. Catalyzes the second half of the cyclization, exclusively from pre-alpha-onocerin. The protein is Alpha-onocerin synthase LCD of Lycopodium clavatum (Stag's-horn clubmoss).